Reading from the N-terminus, the 66-residue chain is Large ribosomal subunit protein bL35 (66 aa).

The protein belongs to the bacterial ribosomal protein bL35 family.

In Wigglesworthia glossinidia brevipalpis, this protein is Large ribosomal subunit protein bL35.